Consider the following 78-residue polypeptide: MSRVCQVTGKRPVSGNNRSHAMNATKRRFLPNLHSHRFWVEAEKRFVTLRVSAKGMRVIDKKGIETVLADLRTRGEKY.

A disordered region spans residues 1–21 (MSRVCQVTGKRPVSGNNRSHA).

This sequence belongs to the bacterial ribosomal protein bL28 family.

The chain is Large ribosomal subunit protein bL28 from Serratia proteamaculans (strain 568).